Consider the following 147-residue polypeptide: Large ribosomal subunit protein bL9 (147 aa).

This sequence belongs to the bacterial ribosomal protein bL9 family.

Functionally, binds to the 23S rRNA. This chain is Large ribosomal subunit protein bL9, found in Campylobacter fetus subsp. fetus (strain 82-40).